A 697-amino-acid polypeptide reads, in one-letter code: DNA ligase (697 aa).

Residues 34–38 (DKTYD), 83–84 (SL), and E114 each bind NAD(+). Catalysis depends on K116, which acts as the N6-AMP-lysine intermediate. Residues R137, E171, K315, and K339 each coordinate NAD(+). 4 residues coordinate Zn(2+): C430, C433, C448, and C453. One can recognise a BRCT domain in the interval 616-697 (KKSSKLNNLN…FHNLLKEENA (82 aa)).

It belongs to the NAD-dependent DNA ligase family. LigA subfamily. Mg(2+) serves as cofactor. It depends on Mn(2+) as a cofactor.

It catalyses the reaction NAD(+) + (deoxyribonucleotide)n-3'-hydroxyl + 5'-phospho-(deoxyribonucleotide)m = (deoxyribonucleotide)n+m + AMP + beta-nicotinamide D-nucleotide.. In terms of biological role, DNA ligase that catalyzes the formation of phosphodiester linkages between 5'-phosphoryl and 3'-hydroxyl groups in double-stranded DNA using NAD as a coenzyme and as the energy source for the reaction. It is essential for DNA replication and repair of damaged DNA. This chain is DNA ligase, found in Mycoplasmopsis synoviae (strain 53) (Mycoplasma synoviae).